A 101-amino-acid chain; its full sequence is Protein Tat (101 aa).

Residues 1–24 form an interaction with human CREBBP region; the sequence is MEPVDPNLEPWKHPGSQPRTACNN. The segment at 1–48 is transactivation; sequence MEPVDPNLEPWKHPGSQPRTACNNCYCKKCCFHCYACFTRKGLGISYG. Cysteine 22, cysteine 25, and cysteine 27 together coordinate Zn(2+). The tract at residues 22–37 is cysteine-rich; that stretch reads CNNCYCKKCCFHCYAC. Lysine 28 is subject to N6-acetyllysine; by host PCAF. Residues cysteine 30, histidine 33, cysteine 34, and cysteine 37 each contribute to the Zn(2+) site. The segment at 38-48 is core; the sequence is FTRKGLGISYG. The span at 48 to 57 shows a compositional bias: basic residues; it reads GRKKRRQRRR. The interval 48-101 is disordered; the sequence is GRKKRRQRRRAPQDSQTHQASLSKQPASQSRGDPTGPTESKKKVERETETDPFD. A Nuclear localization signal, RNA-binding (TAR), and protein transduction motif is present at residues 49–57; it reads RKKRRQRRR. Residues 49 to 86 are interaction with the host capping enzyme RNGTT; that stretch reads RKKRRQRRRAPQDSQTHQASLSKQPASQSRGDPTGPTE. An N6-acetyllysine; by host EP300 and GCN5L2 mark is found at lysine 50 and lysine 51. 2 positions are modified to asymmetric dimethylarginine; by host PRMT6: arginine 52 and arginine 53. Residues 60–79 show a composition bias toward polar residues; the sequence is QDSQTHQASLSKQPASQSRG. Lysine 71 is covalently cross-linked (Glycyl lysine isopeptide (Lys-Gly) (interchain with G-Cter in ubiquitin)). A Cell attachment site motif is present at residues 78–80; sequence RGD. A compositionally biased stretch (basic and acidic residues) spans 86 to 101; sequence ESKKKVERETETDPFD.

It belongs to the lentiviruses Tat family. As to quaternary structure, interacts with host CCNT1. Associates with the P-TEFb complex composed at least of Tat, P-TEFb (CDK9 and CCNT1), TAR RNA, RNA Pol II. Recruits the HATs CREBBP, TAF1/TFIID, EP300, PCAF and GCN5L2. Interacts with host KAT5/Tip60; this interaction targets the latter to degradation. Interacts with the host deacetylase SIRT1. Interacts with host capping enzyme RNGTT; this interaction stimulates RNGTT. Binds to host KDR, and to the host integrins ITGAV/ITGB3 and ITGA5/ITGB1. Interacts with host KPNB1/importin beta-1 without previous binding to KPNA1/importin alpha-1. Interacts with EIF2AK2. Interacts with host nucleosome assembly protein NAP1L1; this interaction may be required for the transport of Tat within the nucleus, since the two proteins interact at the nuclear rim. Interacts with host C1QBP/SF2P32; this interaction involves lysine-acetylated Tat. Interacts with the host chemokine receptors CCR2, CCR3 and CXCR4. Interacts with host DPP4/CD26; this interaction may trigger an anti-proliferative effect. Interacts with host LDLR. Interacts with the host extracellular matrix metalloproteinase MMP1. Interacts with host PRMT6; this interaction mediates Tat's methylation. Interacts with, and is ubiquitinated by MDM2/Hdm2. Interacts with host PSMC3 and HTATIP2. Interacts with STAB1; this interaction may overcome SATB1-mediated repression of IL2 and IL2RA (interleukin) in T cells by binding to the same domain than HDAC1. Interacts (when acetylated) with human CDK13, thereby increasing HIV-1 mRNA splicing and promoting the production of the doubly spliced HIV-1 protein Nef. Interacts with host TBP; this interaction modulates the activity of transcriptional pre-initiation complex. Interacts with host RELA. Interacts with host PLSCR1; this interaction negatively regulates Tat transactivation activity by altering its subcellular distribution. Asymmetrical arginine methylation by host PRMT6 seems to diminish the transactivation capacity of Tat and affects the interaction with host CCNT1. Post-translationally, acetylation by EP300, CREBBP, GCN5L2/GCN5 and PCAF regulates the transactivation activity of Tat. EP300-mediated acetylation of Lys-50 promotes dissociation of Tat from the TAR RNA through the competitive binding to PCAF's bromodomain. In addition, the non-acetylated Tat's N-terminus can also interact with PCAF. PCAF-mediated acetylation of Lys-28 enhances Tat's binding to CCNT1. Lys-50 is deacetylated by SIRT1. In terms of processing, polyubiquitination by host MDM2 does not target Tat to degradation, but activates its transactivation function and fosters interaction with CCNT1 and TAR RNA. Phosphorylated by EIF2AK2 on serine and threonine residues adjacent to the basic region important for TAR RNA binding and function. Phosphorylation of Tat by EIF2AK2 is dependent on the prior activation of EIF2AK2 by dsRNA.

Its subcellular location is the host nucleus. It localises to the host nucleolus. The protein localises to the host cytoplasm. The protein resides in the secreted. Its function is as follows. Transcriptional activator that increases RNA Pol II processivity, thereby increasing the level of full-length viral transcripts. Recognizes a hairpin structure at the 5'-LTR of the nascent viral mRNAs referred to as the transactivation responsive RNA element (TAR) and recruits the cyclin T1-CDK9 complex (P-TEFb complex) that will in turn hyperphosphorylate the RNA polymerase II to allow efficient elongation. The CDK9 component of P-TEFb and other Tat-activated kinases hyperphosphorylate the C-terminus of RNA Pol II that becomes stabilized and much more processive. Other factors such as HTATSF1/Tat-SF1, SUPT5H/SPT5, and HTATIP2 are also important for Tat's function. Besides its effect on RNA Pol II processivity, Tat induces chromatin remodeling of proviral genes by recruiting the histone acetyltransferases (HATs) CREBBP, EP300 and PCAF to the chromatin. This also contributes to the increase in proviral transcription rate, especially when the provirus integrates in transcriptionally silent region of the host genome. To ensure maximal activation of the LTR, Tat mediates nuclear translocation of NF-kappa-B by interacting with host RELA. Through its interaction with host TBP, Tat may also modulate transcription initiation. Tat can reactivate a latently infected cell by penetrating in it and transactivating its LTR promoter. In the cytoplasm, Tat is thought to act as a translational activator of HIV-1 mRNAs. In terms of biological role, extracellular circulating Tat can be endocytosed by surrounding uninfected cells via the binding to several surface receptors such as CD26, CXCR4, heparan sulfate proteoglycans (HSPG) or LDLR. Neurons are rarely infected, but they internalize Tat via their LDLR. Through its interaction with nuclear HATs, Tat is potentially able to control the acetylation-dependent cellular gene expression. Modulates the expression of many cellular genes involved in cell survival, proliferation or in coding for cytokines or cytokine receptors. Tat plays a role in T-cell and neurons apoptosis. Tat induced neurotoxicity and apoptosis probably contribute to neuroAIDS. Circulating Tat also acts as a chemokine-like and/or growth factor-like molecule that binds to specific receptors on the surface of the cells, affecting many cellular pathways. In the vascular system, Tat binds to ITGAV/ITGB3 and ITGA5/ITGB1 integrins dimers at the surface of endothelial cells and competes with bFGF for heparin-binding sites, leading to an excess of soluble bFGF. The sequence is that of Protein Tat from Homo sapiens (Human).